A 706-amino-acid polypeptide reads, in one-letter code: Termination factor NPH-I homolog (706 aa).

In terms of domain architecture, Helicase ATP-binding spans 62 to 227; that stretch reads IGQGENTRGL…VPCFNMLSGR (166 aa). 75–82 contributes to the ATP binding site; that stretch reads HQMGMGKT. A DEAH box motif is present at residues 168-171; that stretch reads DEAH. Positions 417-599 constitute a Helicase C-terminal domain; sequence QCLQPLKVLE…HLNSAFRDLL (183 aa).

It belongs to the DEAD box helicase family. DEAH subfamily. In terms of assembly, part of the viral DNA-directed RNA polymerase that consists of 8 polII-like subunits (RPB1, RPB2, RPB3, RPB5, RPB6, RPB7, RPB9, RPB10), a capping enzyme and a termination factor.

The protein localises to the virion. Its function is as follows. Putative DNA-dependent ATPase required for providing the needed energy to achieve the termination of early transcripts. The polypeptide is Termination factor NPH-I homolog (African swine fever virus (isolate Tick/South Africa/Pretoriuskop Pr4/1996) (ASFV)).